We begin with the raw amino-acid sequence, 160 residues long: Ribosomal RNA large subunit methyltransferase H (160 aa).

S-adenosyl-L-methionine-binding residues include L76 and G108.

The protein belongs to the RNA methyltransferase RlmH family. Homodimer.

The protein resides in the cytoplasm. It catalyses the reaction pseudouridine(1915) in 23S rRNA + S-adenosyl-L-methionine = N(3)-methylpseudouridine(1915) in 23S rRNA + S-adenosyl-L-homocysteine + H(+). In terms of biological role, specifically methylates the pseudouridine at position 1915 (m3Psi1915) in 23S rRNA. The sequence is that of Ribosomal RNA large subunit methyltransferase H from Rhodopseudomonas palustris (strain BisB5).